The primary structure comprises 600 residues: 1-deoxy-D-xylulose-5-phosphate synthase (600 aa).

Residues His63 and 104-106 contribute to the thiamine diphosphate site; that span reads GHS. A Mg(2+)-binding site is contributed by Asp135. Residues 136–137, Asn164, Tyr271, and Glu352 contribute to the thiamine diphosphate site; that span reads GA. Asn164 contacts Mg(2+).

It belongs to the transketolase family. DXPS subfamily. Homodimer. It depends on Mg(2+) as a cofactor. Requires thiamine diphosphate as cofactor.

The enzyme catalyses D-glyceraldehyde 3-phosphate + pyruvate + H(+) = 1-deoxy-D-xylulose 5-phosphate + CO2. The protein operates within metabolic intermediate biosynthesis; 1-deoxy-D-xylulose 5-phosphate biosynthesis; 1-deoxy-D-xylulose 5-phosphate from D-glyceraldehyde 3-phosphate and pyruvate: step 1/1. Catalyzes the acyloin condensation reaction between C atoms 2 and 3 of pyruvate and glyceraldehyde 3-phosphate to yield 1-deoxy-D-xylulose-5-phosphate (DXP). The chain is 1-deoxy-D-xylulose-5-phosphate synthase from Campylobacter fetus subsp. fetus (strain 82-40).